Here is a 389-residue protein sequence, read N- to C-terminus: Chalcone synthase (389 aa).

C164 is an active-site residue.

This sequence belongs to the thiolase-like superfamily. Chalcone/stilbene synthases family.

It carries out the reaction (E)-4-coumaroyl-CoA + 3 malonyl-CoA + 3 H(+) = 2',4,4',6'-tetrahydroxychalcone + 3 CO2 + 4 CoA. It participates in secondary metabolite biosynthesis; flavonoid biosynthesis. In terms of biological role, the primary product of this enzyme is 4,2',4',6'-tetrahydroxychalcone (also termed naringenin-chalcone or chalcone) which can under specific conditions spontaneously isomerize into naringenin. In Pueraria montana var. lobata (Kudzu vine), this protein is Chalcone synthase (CHS).